Reading from the N-terminus, the 876-residue chain is Leucine--tRNA ligase (876 aa).

Residues 42 to 52 (PYPSGKLHMGH) carry the 'HIGH' region motif. The 'KMSKS' region signature appears at 634-638 (KMSKS). An ATP-binding site is contributed by lysine 637.

Belongs to the class-I aminoacyl-tRNA synthetase family.

It is found in the cytoplasm. It carries out the reaction tRNA(Leu) + L-leucine + ATP = L-leucyl-tRNA(Leu) + AMP + diphosphate. The chain is Leucine--tRNA ligase from Neisseria meningitidis serogroup C (strain 053442).